The chain runs to 274 residues: S-adenosylmethionine decarboxylase proenzyme (274 aa).

Residue Ser119 is the Schiff-base intermediate with substrate; via pyruvic acid of the active site. Residue Ser119 is modified to Pyruvic acid (Ser); by autocatalysis. His124 acts as the Proton acceptor; for processing activity in catalysis. Cys147 functions as the Proton donor; for catalytic activity in the catalytic mechanism.

The protein belongs to the prokaryotic AdoMetDC family. Type 2 subfamily. In terms of assembly, heterooctamer of four alpha and four beta chains arranged as a tetramer of alpha/beta heterodimers. The cofactor is pyruvate. Is synthesized initially as an inactive proenzyme. Formation of the active enzyme involves a self-maturation process in which the active site pyruvoyl group is generated from an internal serine residue via an autocatalytic post-translational modification. Two non-identical subunits are generated from the proenzyme in this reaction, and the pyruvate is formed at the N-terminus of the alpha chain, which is derived from the carboxyl end of the proenzyme. The post-translation cleavage follows an unusual pathway, termed non-hydrolytic serinolysis, in which the side chain hydroxyl group of the serine supplies its oxygen atom to form the C-terminus of the beta chain, while the remainder of the serine residue undergoes an oxidative deamination to produce ammonia and the pyruvoyl group blocking the N-terminus of the alpha chain.

It catalyses the reaction S-adenosyl-L-methionine + H(+) = S-adenosyl 3-(methylsulfanyl)propylamine + CO2. It participates in amine and polyamine biosynthesis; S-adenosylmethioninamine biosynthesis; S-adenosylmethioninamine from S-adenosyl-L-methionine: step 1/1. Catalyzes the decarboxylation of S-adenosylmethionine to S-adenosylmethioninamine (dcAdoMet), the propylamine donor required for the synthesis of the polyamines spermine and spermidine from the diamine putrescine. The chain is S-adenosylmethionine decarboxylase proenzyme from Clostridium acetobutylicum (strain ATCC 824 / DSM 792 / JCM 1419 / IAM 19013 / LMG 5710 / NBRC 13948 / NRRL B-527 / VKM B-1787 / 2291 / W).